Consider the following 87-residue polypeptide: Long neurotoxin homolog (87 aa).

The first 21 residues, 1–21, serve as a signal peptide directing secretion; the sequence is MKTLLLTLVVVTIVCLDLGYT. 5 disulfides stabilise this stretch: cysteine 24-cysteine 47, cysteine 27-cysteine 32, cysteine 40-cysteine 64, cysteine 68-cysteine 80, and cysteine 81-cysteine 86.

As to expression, expressed by the venom gland.

The protein localises to the secreted. Functionally, inhibits carbachol-induced muscle contraction in a reversible manner. This chain is Long neurotoxin homolog, found in Bungarus multicinctus (Many-banded krait).